Consider the following 135-residue polypeptide: Salivary protein 15 Iper-1 (135 aa).

Residues 1–22 (MESFVAMKVVCILFLFVVAAEA) form the signal peptide. N-linked (GlcNAc...) asparagine glycans are attached at residues asparagine 93 and asparagine 104. The CD4-binding stretch occupies residues 116–135 (GPNKQTCADKSKCVGHIPGC).

Belongs to the salp15 family. In terms of assembly, interacts with host CD4. Interacts with host DC-SIGN (CD209). (Microbial infection) Interacts with Borrelia outer surface protein C (OspC). As to expression, expressed in salivary glands from feeding female ticks. Highly expressed 4 days after start of feeding.

It is found in the secreted. Functionally, salivary tick protein that downregulates host immune system by binding to both dendritic cells, and CD4(+) T cells. Specifically binds to the CD4 coreceptor on T cells. This interaction prevents the activation of the Src kinase, Lck, and its downstream substrate Zap-70, and results in deficient activation of PLCgamma1, the repression of calcium fluxes triggered by T-cell antigen receptor (TCR) ligation, and a subsequent reduction in interleukin-2 production. This salivary protein also binds to DC-SIGN (CD209) on dendritic cells (DC) and activates the Raf-1 kinase/MEK signaling pathway that results in down-regulating expression of pro-inflammatory cytokines. Furthermore, it inhibits T cell proliferation induced by DCs. It also inhibits in vitro keratinocyte inflammation induced by Borrelia burgdorferi or by the major outer surface protein (OspC) of Borrelia. In addition, it downregulates chemokines and monocyte chemoattractant protein 1, as well as several antimicrobial peptides such as defensins, cathelicidin, psoriasin, and RNase 7. Apart from its immunomodulatory activities, it is also associated with protection of Borrelia spirochetes from antibody-mediated killing through its binding to OspC. In vivo, tests on different immune disease animal models show promising therapeutic results, e.g., in inhibiting HIV infection, experimental autoimmune encephalomyelitis, transplantation rejection, and asthma. In terms of biological role, (Microbial infection) Protects Borrelia garinii from anti-Borrelia antibody-mediated cytotoxicity in vitro. May facilitate B.garinii transmission in mouse model. Its function is as follows. (Microbial infection) Protects Borrelia burgdorferi from anti-Borrelia antibody-mediated cytotoxicity in vitro. (Microbial infection) Protects Borrelia afzelii from anti-Borrelia antibody-mediated cytotoxicity in vitro. This Ixodes persulcatus (Taiga tick) protein is Salivary protein 15 Iper-1.